We begin with the raw amino-acid sequence, 600 residues long: Glutamine--fructose-6-phosphate aminotransferase [isomerizing] (600 aa).

Residue C2 is the Nucleophile; for GATase activity of the active site. Positions C2–E217 constitute a Glutamine amidotransferase type-2 domain. 2 consecutive SIS domains span residues I283–F422 and I452–P590. Catalysis depends on K595, which acts as the For Fru-6P isomerization activity.

As to quaternary structure, homodimer.

Its subcellular location is the cytoplasm. The enzyme catalyses D-fructose 6-phosphate + L-glutamine = D-glucosamine 6-phosphate + L-glutamate. Catalyzes the first step in hexosamine metabolism, converting fructose-6P into glucosamine-6P using glutamine as a nitrogen source. The chain is Glutamine--fructose-6-phosphate aminotransferase [isomerizing] from Geobacillus kaustophilus (strain HTA426).